We begin with the raw amino-acid sequence, 407 residues long: NAD(P)H-quinone oxidoreductase subunit 1 (407 aa).

Helical transmembrane passes span 28 to 48 (WLPL…IAAV), 96 to 116 (WLFT…YLVI), 127 to 147 (ITIG…GALM), 175 to 195 (LALS…VDIV), 203 to 223 (LFSF…IFLI), 267 to 287 (LILA…FIVP), 309 to 329 (ALVG…LAIL), 347 to 367 (WKFL…LVLL), and 374 to 394 (TLPL…AMSL).

It belongs to the complex I subunit 1 family. As to quaternary structure, NDH-1 is composed of at least 11 different subunits.

Its subcellular location is the cell inner membrane. It catalyses the reaction a plastoquinone + NADH + (n+1) H(+)(in) = a plastoquinol + NAD(+) + n H(+)(out). It carries out the reaction a plastoquinone + NADPH + (n+1) H(+)(in) = a plastoquinol + NADP(+) + n H(+)(out). Its function is as follows. NDH-1 shuttles electrons from an unknown electron donor, via FMN and iron-sulfur (Fe-S) centers, to quinones in the respiratory and/or the photosynthetic chain. The immediate electron acceptor for the enzyme in this species is believed to be plastoquinone. Couples the redox reaction to proton translocation, and thus conserves the redox energy in a proton gradient. In Gloeobacter violaceus (strain ATCC 29082 / PCC 7421), this protein is NAD(P)H-quinone oxidoreductase subunit 1.